The primary structure comprises 417 residues: uncharacterized protein (417 aa).

Positions 1–24 (MSQPPINPLGQPQVPAAASPSGQP) are disordered. 4 helical membrane-spanning segments follow: residues 54–74 (VYDT…LLTA), 79–99 (LMLY…TLLI), 117–137 (AIVV…GAFV), and 143–163 (MLVF…LYFM). A compositionally biased stretch (basic and acidic residues) spans 211–228 (DLSASARMEEHEASQRQD). 2 disordered regions span residues 211-283 (DLSA…FKDD) and 308-417 (IMPA…RKNK). Residues 312–322 (SSRSPNFSTGT) are compositionally biased toward polar residues. Low complexity predominate over residues 336 to 347 (EPSIPRVSSSSR). Residues 391–401 (STANLSPSNPF) show a composition bias toward polar residues.

This sequence belongs to the chlamydial CPn_0443/CT_005/TC_0273 family.

The protein localises to the cell membrane. This is an uncharacterized protein from Chlamydia pneumoniae (Chlamydophila pneumoniae).